Reading from the N-terminus, the 343-residue chain is Holliday junction branch migration complex subunit RuvB (343 aa).

Positions 1 to 186 are large ATPase domain (RuvB-L); it reads MVMARKSDTL…FQIQERLEYY (186 aa). ATP contacts are provided by residues L25, R26, G67, K70, T71, S72, 133-135, R176, Y186, and R223; that span reads EDF. T71 contributes to the Mg(2+) binding site. Residues 187-257 form a small ATPAse domain (RuvB-S) region; the sequence is DAKALESILH…LAQKSLDRLG (71 aa). The segment at 260-343 is head domain (RuvB-H); the sequence is ASGLDSMDRK…PPPTPQGSLF (84 aa). DNA contacts are provided by R296, R315, and R320.

It belongs to the RuvB family. Homohexamer. Forms an RuvA(8)-RuvB(12)-Holliday junction (HJ) complex. HJ DNA is sandwiched between 2 RuvA tetramers; dsDNA enters through RuvA and exits via RuvB. An RuvB hexamer assembles on each DNA strand where it exits the tetramer. Each RuvB hexamer is contacted by two RuvA subunits (via domain III) on 2 adjacent RuvB subunits; this complex drives branch migration. In the full resolvosome a probable DNA-RuvA(4)-RuvB(12)-RuvC(2) complex forms which resolves the HJ.

The protein resides in the cytoplasm. The catalysed reaction is ATP + H2O = ADP + phosphate + H(+). Its function is as follows. The RuvA-RuvB-RuvC complex processes Holliday junction (HJ) DNA during genetic recombination and DNA repair, while the RuvA-RuvB complex plays an important role in the rescue of blocked DNA replication forks via replication fork reversal (RFR). RuvA specifically binds to HJ cruciform DNA, conferring on it an open structure. The RuvB hexamer acts as an ATP-dependent pump, pulling dsDNA into and through the RuvAB complex. RuvB forms 2 homohexamers on either side of HJ DNA bound by 1 or 2 RuvA tetramers; 4 subunits per hexamer contact DNA at a time. Coordinated motions by a converter formed by DNA-disengaged RuvB subunits stimulates ATP hydrolysis and nucleotide exchange. Immobilization of the converter enables RuvB to convert the ATP-contained energy into a lever motion, pulling 2 nucleotides of DNA out of the RuvA tetramer per ATP hydrolyzed, thus driving DNA branch migration. The RuvB motors rotate together with the DNA substrate, which together with the progressing nucleotide cycle form the mechanistic basis for DNA recombination by continuous HJ branch migration. Branch migration allows RuvC to scan DNA until it finds its consensus sequence, where it cleaves and resolves cruciform DNA. The chain is Holliday junction branch migration complex subunit RuvB from Myxococcus xanthus (strain DK1622).